The chain runs to 206 residues: Small ribosomal subunit protein uS3 (206 aa).

A KH type-2 domain is found at 39-107; it reads IRSYINESFK…SVEVNVVGVK (69 aa).

This sequence belongs to the universal ribosomal protein uS3 family. Part of the 30S ribosomal subunit. Forms a tight complex with proteins S10 and S14.

In terms of biological role, binds the lower part of the 30S subunit head. Binds mRNA in the 70S ribosome, positioning it for translation. In Wolbachia pipientis subsp. Culex pipiens (strain wPip), this protein is Small ribosomal subunit protein uS3.